A 159-amino-acid polypeptide reads, in one-letter code: 2-C-methyl-D-erythritol 2,4-cyclodiphosphate synthase (159 aa).

2 residues coordinate a divalent metal cation: D11 and H13. 4-CDP-2-C-methyl-D-erythritol 2-phosphate-binding positions include 11–13 (DVH) and 37–38 (HS). Residue H45 participates in a divalent metal cation binding. 4-CDP-2-C-methyl-D-erythritol 2-phosphate is bound by residues 59 to 61 (DIG) and 64 to 68 (FPDSD).

It belongs to the IspF family. Homotrimer. Requires a divalent metal cation as cofactor.

It catalyses the reaction 4-CDP-2-C-methyl-D-erythritol 2-phosphate = 2-C-methyl-D-erythritol 2,4-cyclic diphosphate + CMP. It functions in the pathway isoprenoid biosynthesis; isopentenyl diphosphate biosynthesis via DXP pathway; isopentenyl diphosphate from 1-deoxy-D-xylulose 5-phosphate: step 4/6. Its function is as follows. Involved in the biosynthesis of isopentenyl diphosphate (IPP) and dimethylallyl diphosphate (DMAPP), two major building blocks of isoprenoid compounds. Catalyzes the conversion of 4-diphosphocytidyl-2-C-methyl-D-erythritol 2-phosphate (CDP-ME2P) to 2-C-methyl-D-erythritol 2,4-cyclodiphosphate (ME-CPP) with a corresponding release of cytidine 5-monophosphate (CMP). This chain is 2-C-methyl-D-erythritol 2,4-cyclodiphosphate synthase, found in Solibacter usitatus (strain Ellin6076).